The chain runs to 446 residues: Probable beta-1,4-xylosyltransferase IRX9L (446 aa).

Residues 1–26 (MSRRNAGAMQREGSVKDWEEFDPSPS) form a disordered region. Residues 1 to 85 (MSRRNAGAMQ…SRSKGMSLKR (85 aa)) are Cytoplasmic-facing. A helical; Signal-anchor for type II membrane protein membrane pass occupies residues 86–106 (AMLQLLVCFMVGIFIGFTPPF). Residues 107-446 (SVDLPGKIAS…RNLDAVVPIT (340 aa)) are Lumenal-facing. Residues N185, N258, N361, and N411 are each glycosylated (N-linked (GlcNAc...) asparagine).

Belongs to the glycosyltransferase 43 family.

It localises to the golgi apparatus membrane. Functionally, probable beta-1,4-xylosyltransferase involved in xylan biosynthesis in cell walls. The polypeptide is Probable beta-1,4-xylosyltransferase IRX9L (Oryza sativa subsp. japonica (Rice)).